Reading from the N-terminus, the 842-residue chain is Squamosa promoter-binding-like protein 9 (842 aa).

Gly residues predominate over residues 1 to 18 (MDAPGGGGGGGGGGGGVD). Disordered regions lie at residues 1 to 22 (MDAP…AGEP), 59 to 97 (ALLP…RVRK), and 140 to 168 (RKKP…TPAE). Positions 69–85 (PAEAEAEAAGPASLPSS) are enriched in low complexity. The span at 146-162 (AGRGSGAAVGGSGGGAS) shows a compositional bias: gly residues. An SBP-type; atypical zinc finger spans residues 168–245 (EMKCQVPGCE…ERHNKRRRRK (78 aa)). The Zn(2+) site is built by Cys-171, Cys-176, Cys-193, Cys-196, Cys-212, Cys-215, His-219, and Cys-231. The Bipartite nuclear localization signal signature appears at 228 to 244 (KRSCRRKLERHNKRRRR). Basic residues predominate over residues 236–246 (ERHNKRRRRKP). The tract at residues 236-256 (ERHNKRRRRKPDSKGILEKDI) is disordered.

In terms of tissue distribution, ubiquitous.

Its subcellular location is the nucleus. Functionally, trans-acting factor that binds specifically to the consensus nucleotide sequence 5'-TNCGTACAA-3'. The protein is Squamosa promoter-binding-like protein 9 (SPL9) of Oryza sativa subsp. japonica (Rice).